We begin with the raw amino-acid sequence, 24 residues long: FWGALVAGLAPKVAIGIKAINKKG.

Expressed by the venom gland.

It is found in the secreted. Functionally, antimicrobial peptide active against Gram-negative bacterium E.coli MH1 (MIC=2.5 uM) and P.aeruginosa PAO1 (MIC=10 uM) and against Gram-positive bacterium A.globiformis VKM Ac-1112 (MIC=0.6 uM). This chain is M-ectatotoxin-Eb2b, found in Ectatomma brunneum (Ant).